A 64-amino-acid polypeptide reads, in one-letter code: Large ribosomal subunit protein uL29 (64 aa).

Belongs to the universal ribosomal protein uL29 family.

This is Large ribosomal subunit protein uL29 from Synechococcus elongatus (strain ATCC 33912 / PCC 7942 / FACHB-805) (Anacystis nidulans R2).